The chain runs to 760 residues: Serine/threonine-protein kinase PknG (760 aa).

The disordered stretch occupies residues 1 to 31 (MTSPENPDLPDADDAYVDSGPGTQPASLEDL). The 243-residue stretch at 161–403 (YEIKGCIAHG…SAEEMSSQLL (243 aa)) folds into the Protein kinase domain. ATP-binding positions include 167–175 (IAHGGLGWV) and Lys191. Residue Asp286 is the Proton acceptor of the active site.

This sequence belongs to the protein kinase superfamily. Ser/Thr protein kinase family. In terms of assembly, interacts with GarA in vitro.

It carries out the reaction L-seryl-[protein] + ATP = O-phospho-L-seryl-[protein] + ADP + H(+). The catalysed reaction is L-threonyl-[protein] + ATP = O-phospho-L-threonyl-[protein] + ADP + H(+). This chain is Serine/threonine-protein kinase PknG (pknG), found in Mycolicibacterium smegmatis (strain ATCC 700084 / mc(2)155) (Mycobacterium smegmatis).